Reading from the N-terminus, the 393-residue chain is Acetate kinase (393 aa).

Asparagine 7 lines the Mg(2+) pocket. Lysine 14 provides a ligand contact to ATP. Arginine 90 is a substrate binding site. Catalysis depends on aspartate 147, which acts as the Proton donor/acceptor. ATP contacts are provided by residues 205-209 (HLGNG), 280-282 (DFR), and 328-332 (GIGEN). Residue glutamate 380 participates in Mg(2+) binding.

This sequence belongs to the acetokinase family. As to quaternary structure, homodimer. Requires Mg(2+) as cofactor. Mn(2+) serves as cofactor.

It localises to the cytoplasm. The enzyme catalyses acetate + ATP = acetyl phosphate + ADP. It functions in the pathway metabolic intermediate biosynthesis; acetyl-CoA biosynthesis; acetyl-CoA from acetate: step 1/2. Its function is as follows. Catalyzes the formation of acetyl phosphate from acetate and ATP. Can also catalyze the reverse reaction. This is Acetate kinase from Finegoldia magna (strain ATCC 29328 / DSM 20472 / WAL 2508) (Peptostreptococcus magnus).